The chain runs to 253 residues: Phosphoglycerate mutase 2 (253 aa).

A Phosphothreonine modification is found at T3. Residues 10-17 (RHGESLWN), 23-24 (CG), R62, 89-92 (ERHY), K100, and 116-117 (RR) contribute to the substrate site. H11 serves as the catalytic Tele-phosphohistidine intermediate. Position 14 is a phosphoserine (S14). Catalysis depends on E89, which acts as the Proton donor/acceptor. Residue S118 is modified to Phosphoserine. Residue T121 is modified to Phosphothreonine. Residues Y132 and Y133 each carry the phosphotyrosine modification. At S135 the chain carries Phosphoserine. Phosphothreonine is present on T152. 187-188 (GN) provides a ligand contact to substrate.

Belongs to the phosphoglycerate mutase family. BPG-dependent PGAM subfamily. As to quaternary structure, homodimer. Interacts with ENO1. Expressed in the testes (at protein level).

It catalyses the reaction (2R)-2-phosphoglycerate = (2R)-3-phosphoglycerate. The enzyme catalyses (2R)-3-phospho-glyceroyl phosphate = (2R)-2,3-bisphosphoglycerate + H(+). Its function is as follows. Interconversion of 3- and 2-phosphoglycerate with 2,3-bisphosphoglycerate as the primer of the reaction. Can also catalyze the reaction of EC 5.4.2.4 (synthase), but with a reduced activity. This Mus musculus (Mouse) protein is Phosphoglycerate mutase 2 (Pgam2).